Consider the following 697-residue polypeptide: Elongation factor G (697 aa).

The tr-type G domain occupies 8–283 (EHIRNIGICA…AVVDFLPSPT (276 aa)). GTP-binding positions include 17–24 (AHIDAGKT), 81–85 (DTPGH), and 135–138 (NKMD).

It belongs to the TRAFAC class translation factor GTPase superfamily. Classic translation factor GTPase family. EF-G/EF-2 subfamily.

Its subcellular location is the cytoplasm. Functionally, catalyzes the GTP-dependent ribosomal translocation step during translation elongation. During this step, the ribosome changes from the pre-translocational (PRE) to the post-translocational (POST) state as the newly formed A-site-bound peptidyl-tRNA and P-site-bound deacylated tRNA move to the P and E sites, respectively. Catalyzes the coordinated movement of the two tRNA molecules, the mRNA and conformational changes in the ribosome. The sequence is that of Elongation factor G from Rickettsia massiliae (strain Mtu5).